Reading from the N-terminus, the 305-residue chain is E3 ubiquitin-protein ligase RNF115 (305 aa).

A2 bears the N-acetylalanine mark. Residues 100 to 110 are compositionally biased toward basic and acidic residues; it reads NRANERGHQTH. Residues 100–139 form a disordered region; that stretch reads NRANERGHQTHTDFWGPSRPPRLPMTRRYRSRGSTRPDRS. S133 carries the phosphoserine modification. The segment at 229-270 adopts an RING-type zinc-finger fold; it reads CPVCKEDYTVEEKVRQLPCNHFFHSSCIVPWLELHDTCPVCR. The disordered stretch occupies residues 274-305; the sequence is NGEDSTRQTQSSEASASNRFSNDSQLHDRWTF. Positions 280-297 are enriched in polar residues; the sequence is RQTQSSEASASNRFSNDS.

As to quaternary structure, interacts with RAB7A. Interacts with EGFR and FLT3. Interacts with BST2. Interacts with STX17. Interacts with YWHAE. In terms of processing, phosphorylated by AKT1, allowing association with the 14-3-3 chaperones that facilitates associating with TLRs. Post-translationally, deubiquitinated by USP9X; antogonizing its autoubiquitination and subsequent proteasomal degradation. RING-type zinc finger-dependent and E2-dependent autoubiquitination.

The protein localises to the cytoplasm. It is found in the cytoplasmic vesicle. It localises to the phagosome. The protein resides in the nucleus. Its subcellular location is the endoplasmic reticulum. The protein localises to the golgi apparatus. The enzyme catalyses S-ubiquitinyl-[E2 ubiquitin-conjugating enzyme]-L-cysteine + [acceptor protein]-L-lysine = [E2 ubiquitin-conjugating enzyme]-L-cysteine + N(6)-ubiquitinyl-[acceptor protein]-L-lysine.. The protein operates within protein modification; protein ubiquitination. Its function is as follows. E3 ubiquitin-protein ligase that catalyzes the 'Lys-48'- and/or 'Lys-63'-linked polyubiquitination of various substrates and thereby plays a role in a number of signaling pathways including autophagy, innate immunity, cell proliferation and cell death. Plays a role in the endosomal trafficking and degradation of membrane receptors including EGFR, FLT3, MET and CXCR4 through their polyubiquitination. Participates together with BST2 in antiviral immunity by facilitating the internalization of HIV-1 virions into intracellular vesicles leading to their lysosomal degradation. Also possesses an antiviral activity independently of BST2 by promoting retroviral GAG proteins ubiquitination, redistribution to endo-lysosomal compartments and, ultimately, lysosomal degradation. Catalyzes distinct types of ubiquitination on MAVS and STING1 at different phases of viral infection to promote innate antiviral response. Mediates the 'Lys-48'-linked ubiquitination of MAVS leading to its proteasomal degradation and ubiquitinates STING1 via 'Lys-63'-linked polyubiquitination, critical for its oligomerization and the subsequent recruitment of TBK1. Plays a positive role in the autophagosome-lysosome fusion by interacting with STX17 and enhancing its stability without affecting 'Lys-48'- or 'Lys-63'-linked polyubiquitination levels, which in turn promotes autophagosome maturation. Negatively regulates TLR-induced expression of proinflammatory cytokines by catalyzing 'Lys-11'-linked ubiquitination of RAB1A and RAB13 to inhibit post-ER trafficking of TLRs to the Golgi by RAB1A and subsequently from the Golgi apparatus to the cell surface by RAB13. The polypeptide is E3 ubiquitin-protein ligase RNF115 (Mus musculus (Mouse)).